Here is a 916-residue protein sequence, read N- to C-terminus: Chitin synthase B (916 aa).

Disordered regions lie at residues 1 to 84 (MAYQ…AGFH) and 114 to 141 (SPYA…GGGL). N-linked (GlcNAc...) asparagine glycosylation is present at N18. Residues 60–75 (RGTSPVRPTSGYSLTE) are compositionally biased toward polar residues. N546 carries an N-linked (GlcNAc...) asparagine glycan. 7 consecutive transmembrane segments (helical) span residues 572-594 (MFFL…FSLA), 628-648 (IINT…FILA), 663-683 (SFVV…YLVV), 715-735 (IIII…FMYL), 743-763 (SFPA…VYAF), 845-865 (LVTL…SDGM), and 884-904 (ALLW…CWFL).

The protein belongs to the chitin synthase family. Class III subfamily.

Its subcellular location is the cell membrane. The enzyme catalyses [(1-&gt;4)-N-acetyl-beta-D-glucosaminyl](n) + UDP-N-acetyl-alpha-D-glucosamine = [(1-&gt;4)-N-acetyl-beta-D-glucosaminyl](n+1) + UDP + H(+). Functionally, polymerizes chitin, a structural polymer of the cell wall and septum, by transferring the sugar moiety of UDP-GlcNAc to the non-reducing end of the growing chitin polymer. Involved in hyphal growth and more particularly in branching. This Aspergillus oryzae (strain ATCC 42149 / RIB 40) (Yellow koji mold) protein is Chitin synthase B.